A 312-amino-acid chain; its full sequence is Aspartate carbamoyltransferase catalytic subunit (312 aa).

2 residues coordinate carbamoyl phosphate: R58 and T59. K86 contributes to the L-aspartate binding site. Positions 108, 136, and 139 each coordinate carbamoyl phosphate. The L-aspartate site is built by R169 and R223. 2 residues coordinate carbamoyl phosphate: G264 and P265.

Belongs to the aspartate/ornithine carbamoyltransferase superfamily. ATCase family. In terms of assembly, heterododecamer (2C3:3R2) of six catalytic PyrB chains organized as two trimers (C3), and six regulatory PyrI chains organized as three dimers (R2).

The catalysed reaction is carbamoyl phosphate + L-aspartate = N-carbamoyl-L-aspartate + phosphate + H(+). The protein operates within pyrimidine metabolism; UMP biosynthesis via de novo pathway; (S)-dihydroorotate from bicarbonate: step 2/3. In terms of biological role, catalyzes the condensation of carbamoyl phosphate and aspartate to form carbamoyl aspartate and inorganic phosphate, the committed step in the de novo pyrimidine nucleotide biosynthesis pathway. This chain is Aspartate carbamoyltransferase catalytic subunit, found in Syntrophomonas wolfei subsp. wolfei (strain DSM 2245B / Goettingen).